The primary structure comprises 309 residues: Dehydrogenase/reductase SDR family member 7B (309 aa).

The Cytoplasmic segment spans residues 1–5 (MERAL). The chain crosses the membrane as a helical; Signal-anchor for type II membrane protein span at residues 6–26 (GVGIGPLAAGTVGLLILLKVI). Residues 27 to 271 (QRLRRRPNIQ…LKAVCQKKKD (245 aa)) are Lumenal-facing. Positions 47 and 49 each coordinate NAD(+). S179 is a substrate binding site. Y192, K196, and T227 together coordinate NAD(+). The active-site Proton acceptor is the Y192.

The protein belongs to the short-chain dehydrogenases/reductases (SDR) family.

It is found in the endoplasmic reticulum membrane. Putative oxidoreductase. In Danio rerio (Zebrafish), this protein is Dehydrogenase/reductase SDR family member 7B (dhrs7b).